A 282-amino-acid chain; its full sequence is ATP synthase gamma chain (282 aa).

The protein belongs to the ATPase gamma chain family. As to quaternary structure, F-type ATPases have 2 components, CF(1) - the catalytic core - and CF(0) - the membrane proton channel. CF(1) has five subunits: alpha(3), beta(3), gamma(1), delta(1), epsilon(1). CF(0) has three main subunits: a, b and c.

The protein localises to the cell membrane. Produces ATP from ADP in the presence of a proton gradient across the membrane. The gamma chain is believed to be important in regulating ATPase activity and the flow of protons through the CF(0) complex. The sequence is that of ATP synthase gamma chain from Clostridium botulinum (strain Langeland / NCTC 10281 / Type F).